The primary structure comprises 428 residues: AP-1 complex subunit mu-1 (428 aa).

In terms of domain architecture, MHD spans 170–426; it reads KNEVFLDVIE…ITMAGEYELR (257 aa).

Belongs to the adaptor complexes medium subunit family. In terms of assembly, adaptor protein complex 1 (AP-1) is a heterotetramer composed of two large adaptins (gamma-type subunit and beta-type subunit), a medium adaptin (mu-type subunit) and a small adaptin (sigma-type subunit).

Its subcellular location is the golgi apparatus. The protein resides in the cytoplasmic vesicle. It localises to the clathrin-coated vesicle membrane. Functionally, subunit of clathrin-associated adaptor protein complex 1 that plays a role in protein sorting at the trans-Golgi network and early endosomes (TGN/EE). The AP complexes mediate the recruitment of clathrin to membranes and the recognition of sorting signals within the cytosolic tails of transmembrane cargo molecules. Functions redundantly with AP1M2 in multiple post-Golgi trafficking pathways leading from the TGN to the vacuole, the plasma membrane, and the cell-division plane. This chain is AP-1 complex subunit mu-1 (AP1M1), found in Arabidopsis thaliana (Mouse-ear cress).